The sequence spans 593 residues: Epidermal growth factor receptor kinase substrate 8-like protein 3 (593 aa).

One can recognise a PTB domain in the interval 28 to 155 (QHRVEHLMTC…ALEEELEQRP (128 aa)). 3 disordered regions span residues 149–171 (EELE…RGPA), 184–239 (LEPG…ERDE), and 374–451 (ADWT…PAQP). Residue Ser-231 is modified to Phosphoserine. Residues 386-401 (PTFSDDWQLPEPSSQA) are compositionally biased toward polar residues. Basic and acidic residues predominate over residues 425-435 (PQEKTHNHDPQ). Residues 450–509 (QPALKMQVLYEFEARNPRELTVVQGEKLEVLDHSKRWWLVKNEAGRSGYIPSNILEPLQP) form the SH3 domain.

This sequence belongs to the EPS8 family. Interacts with ABI1. Part of a complex that contains SOS1, ABI1 and EPS8L2. Interacts with FASLG.

It is found in the cytoplasm. The protein is Epidermal growth factor receptor kinase substrate 8-like protein 3 (EPS8L3) of Homo sapiens (Human).